Here is a 367-residue protein sequence, read N- to C-terminus: Methylthioribose-1-phosphate isomerase (367 aa).

The active-site Proton donor is Asp-250.

It belongs to the eIF-2B alpha/beta/delta subunits family. MtnA subfamily.

It is found in the cytoplasm. The protein resides in the nucleus. It carries out the reaction 5-(methylsulfanyl)-alpha-D-ribose 1-phosphate = 5-(methylsulfanyl)-D-ribulose 1-phosphate. The protein operates within amino-acid biosynthesis; L-methionine biosynthesis via salvage pathway; L-methionine from S-methyl-5-thio-alpha-D-ribose 1-phosphate: step 1/6. Its function is as follows. Catalyzes the interconversion of methylthioribose-1-phosphate (MTR-1-P) into methylthioribulose-1-phosphate (MTRu-1-P). This chain is Methylthioribose-1-phosphate isomerase (IDI2), found in Zea mays (Maize).